A 231-amino-acid chain; its full sequence is Large ribosomal subunit protein uL1 (231 aa).

The protein belongs to the universal ribosomal protein uL1 family. As to quaternary structure, part of the 50S ribosomal subunit.

Its function is as follows. Binds directly to 23S rRNA. The L1 stalk is quite mobile in the ribosome, and is involved in E site tRNA release. Protein L1 is also a translational repressor protein, it controls the translation of the L11 operon by binding to its mRNA. The sequence is that of Large ribosomal subunit protein uL1 from Ruthia magnifica subsp. Calyptogena magnifica.